The following is a 274-amino-acid chain: Ethanolamine ammonia-lyase small subunit (274 aa).

Val-161, Glu-182, and Cys-211 together coordinate adenosylcob(III)alamin.

This sequence belongs to the EutC family. The basic unit is a heterodimer which dimerizes to form tetramers. The heterotetramers trimerize; 6 large subunits form a core ring with 6 small subunits projecting outwards. Adenosylcob(III)alamin is required as a cofactor.

Its subcellular location is the bacterial microcompartment. The catalysed reaction is ethanolamine = acetaldehyde + NH4(+). It functions in the pathway amine and polyamine degradation; ethanolamine degradation. In terms of biological role, catalyzes the deamination of various vicinal amino-alcohols to oxo compounds. Allows this organism to utilize ethanolamine as the sole source of nitrogen and carbon in the presence of external vitamin B12. This Pseudomonas fluorescens (strain ATCC BAA-477 / NRRL B-23932 / Pf-5) protein is Ethanolamine ammonia-lyase small subunit.